Here is a 266-residue protein sequence, read N- to C-terminus: 4-hydroxy-tetrahydrodipicolinate reductase (266 aa).

Residues 8–13 (GAAGRM) and Glu-33 contribute to the NAD(+) site. Arg-34 provides a ligand contact to NADP(+). NAD(+)-binding positions include 97–99 (GST) and 121–124 (APNM). The active-site Proton donor/acceptor is the His-154. His-155 is a (S)-2,3,4,5-tetrahydrodipicolinate binding site. The active-site Proton donor is the Lys-158. Residue 164 to 165 (GT) participates in (S)-2,3,4,5-tetrahydrodipicolinate binding.

This sequence belongs to the DapB family.

It localises to the cytoplasm. The enzyme catalyses (S)-2,3,4,5-tetrahydrodipicolinate + NAD(+) + H2O = (2S,4S)-4-hydroxy-2,3,4,5-tetrahydrodipicolinate + NADH + H(+). It catalyses the reaction (S)-2,3,4,5-tetrahydrodipicolinate + NADP(+) + H2O = (2S,4S)-4-hydroxy-2,3,4,5-tetrahydrodipicolinate + NADPH + H(+). It participates in amino-acid biosynthesis; L-lysine biosynthesis via DAP pathway; (S)-tetrahydrodipicolinate from L-aspartate: step 4/4. Functionally, catalyzes the conversion of 4-hydroxy-tetrahydrodipicolinate (HTPA) to tetrahydrodipicolinate. This chain is 4-hydroxy-tetrahydrodipicolinate reductase, found in Geobacter sulfurreducens (strain ATCC 51573 / DSM 12127 / PCA).